A 345-amino-acid polypeptide reads, in one-letter code: Phosphate acyltransferase (345 aa).

This sequence belongs to the PlsX family. As to quaternary structure, homodimer. Probably interacts with PlsY.

Its subcellular location is the cytoplasm. It catalyses the reaction a fatty acyl-[ACP] + phosphate = an acyl phosphate + holo-[ACP]. It functions in the pathway lipid metabolism; phospholipid metabolism. In terms of biological role, catalyzes the reversible formation of acyl-phosphate (acyl-PO(4)) from acyl-[acyl-carrier-protein] (acyl-ACP). This enzyme utilizes acyl-ACP as fatty acyl donor, but not acyl-CoA. This Chromobacterium violaceum (strain ATCC 12472 / DSM 30191 / JCM 1249 / CCUG 213 / NBRC 12614 / NCIMB 9131 / NCTC 9757 / MK) protein is Phosphate acyltransferase.